Here is a 763-residue protein sequence, read N- to C-terminus: Ras and Rab interactor 1 (763 aa).

An N-acetylmethionine modification is found at Met1. Residues 1–52 (MEDPGETGAHPLGATNLNFVPGHQQKEKPSTDPLYDTPDTRGVQAGGSQQPA) form a disordered region. Phosphotyrosine; by ABL1 and ABL2 is present on Tyr35. Residues 68–151 (WLQLRANAAA…QLICGYCRTR (84 aa)) enclose the SH2 domain. 3 disordered regions span residues 177–200 (LNTKDQQRPSEAPPIPRLKARSPQ), 238–273 (STETSSPLSPPAVPPPPVPVLPGTSSSQTERLPPRQ), and 301–331 (QEVDCCSPSSSEEEGSSGSPTTSPRLSRPRH). Phosphoserine is present on residues Ser198, Ser246, Ser319, and Ser323. Residues 245–257 (LSPPAVPPPPVPV) show a composition bias toward pro residues. The span at 316 to 326 (SSGSPTTSPRL) shows a compositional bias: low complexity. Ser340 is subject to Phosphoserine; by PKD/PRKD1. The VPS9 domain maps to 445–587 (LSADGSLGRL…LSGLSQARAL (143 aa)). Ser598 is modified (phosphoserine). The Ras-associating domain maps to 613–695 (FQHLLRVAYQ…GYLIYRRAER (83 aa)). Arg681 is modified (omega-N-methylarginine). The segment at 698–763 (TQGAVAEKAK…KAEGSQALEE (66 aa)) is disordered. Residues 727–755 (REGKPRIAVDQEGKDQARGGHIGPEEQKA) are compositionally biased toward basic and acidic residues.

The protein belongs to the RIN (Ras interaction/interference) family. As to quaternary structure, interacts with the GTP-bound form of Ras proteins (NRAS, HRAS and KRAS). This interaction prevents the association between RAF1 and Ras. Interacts with 14-3-3 proteins YWHAB, YWHAE and YWHAZ when phosphorylated on Ser-340. Interacts with the SH3 domain of ABL1 and ABL2. Interacts with RAB5A. The interaction with Ras is probably regulated and antagonized by the interaction with 14-3-3 proteins. The interaction with 14-3-3 proteins is regulated by phosphorylation on Ser-340. Phosphorylated on tyrosine residues by ABL1 and ABL2. Phosphorylation at Ser-340 by PRKD1 induces interaction with 14-3-3 proteins. In terms of tissue distribution, highly expressed in brain. Weakly or no expressed in other tissues, except in testis, where it is expressed at intermediate level. In brain, it is mainly expressed in postnatal forebrain neurons in which it is localized in dendrites and colocalizes with Ras.

It is found in the cytoplasm. It localises to the membrane. The protein localises to the cytoskeleton. In terms of biological role, ras effector protein, which may serve as an inhibitory modulator of neuronal plasticity in aversive memory formation. Can affect Ras signaling at different levels. First, by competing with RAF1 protein for binding to activated Ras. Second, by enhancing signaling from ABL1 and ABL2, which regulate cytoskeletal remodeling. Third, by activating RAB5A, possibly by functioning as a guanine nucleotide exchange factor (GEF) for RAB5A, by exchanging bound GDP for free GTP, and facilitating Ras-activated receptor endocytosis. This Mus musculus (Mouse) protein is Ras and Rab interactor 1 (Rin1).